We begin with the raw amino-acid sequence, 274 residues long: Putative phosphoenolpyruvate synthase regulatory protein (274 aa).

154-161 is an ADP binding site; that stretch reads AVSRSGKT.

Belongs to the pyruvate, phosphate/water dikinase regulatory protein family. PSRP subfamily.

It catalyses the reaction [pyruvate, water dikinase] + ADP = [pyruvate, water dikinase]-phosphate + AMP + H(+). The catalysed reaction is [pyruvate, water dikinase]-phosphate + phosphate + H(+) = [pyruvate, water dikinase] + diphosphate. Its function is as follows. Bifunctional serine/threonine kinase and phosphorylase involved in the regulation of the phosphoenolpyruvate synthase (PEPS) by catalyzing its phosphorylation/dephosphorylation. The sequence is that of Putative phosphoenolpyruvate synthase regulatory protein from Alkalilimnicola ehrlichii (strain ATCC BAA-1101 / DSM 17681 / MLHE-1).